The following is a 356-amino-acid chain: Cobalt-precorrin-5B C(1)-methyltransferase (356 aa).

Belongs to the CbiD family.

The enzyme catalyses Co-precorrin-5B + S-adenosyl-L-methionine = Co-precorrin-6A + S-adenosyl-L-homocysteine. Its pathway is cofactor biosynthesis; adenosylcobalamin biosynthesis; cob(II)yrinate a,c-diamide from sirohydrochlorin (anaerobic route): step 6/10. Catalyzes the methylation of C-1 in cobalt-precorrin-5B to form cobalt-precorrin-6A. The chain is Cobalt-precorrin-5B C(1)-methyltransferase from Geobacter sp. (strain M21).